The chain runs to 574 residues: Arginine--tRNA ligase (574 aa).

The short motif at 121–131 (PNIAKEMHIGH) is the 'HIGH' region element.

This sequence belongs to the class-I aminoacyl-tRNA synthetase family. In terms of assembly, monomer.

The protein localises to the cytoplasm. The catalysed reaction is tRNA(Arg) + L-arginine + ATP = L-arginyl-tRNA(Arg) + AMP + diphosphate. This Buchnera aphidicola subsp. Acyrthosiphon pisum (strain 5A) protein is Arginine--tRNA ligase.